A 458-amino-acid polypeptide reads, in one-letter code: Argininosuccinate lyase (458 aa).

The protein belongs to the lyase 1 family. Argininosuccinate lyase subfamily.

It localises to the cytoplasm. It catalyses the reaction 2-(N(omega)-L-arginino)succinate = fumarate + L-arginine. Its pathway is amino-acid biosynthesis; L-arginine biosynthesis; L-arginine from L-ornithine and carbamoyl phosphate: step 3/3. This chain is Argininosuccinate lyase, found in Salmonella agona (strain SL483).